A 228-amino-acid chain; its full sequence is UPF0173 metal-dependent hydrolase LMHCC_0991 (228 aa).

It belongs to the UPF0173 family.

The protein is UPF0173 metal-dependent hydrolase LMHCC_0991 of Listeria monocytogenes serotype 4a (strain HCC23).